The sequence spans 469 residues: 3-isopropylmalate dehydratase large subunit (469 aa).

3 residues coordinate [4Fe-4S] cluster: C350, C410, and C413.

It belongs to the aconitase/IPM isomerase family. LeuC type 1 subfamily. Heterodimer of LeuC and LeuD. The cofactor is [4Fe-4S] cluster.

The enzyme catalyses (2R,3S)-3-isopropylmalate = (2S)-2-isopropylmalate. It functions in the pathway amino-acid biosynthesis; L-leucine biosynthesis; L-leucine from 3-methyl-2-oxobutanoate: step 2/4. Its function is as follows. Catalyzes the isomerization between 2-isopropylmalate and 3-isopropylmalate, via the formation of 2-isopropylmaleate. This is 3-isopropylmalate dehydratase large subunit from Chelativorans sp. (strain BNC1).